The following is a 239-amino-acid chain: Phosducin-like protein 3 (239 aa).

At M1 the chain carries N-acetylmethionine. In terms of domain architecture, Phosducin spans 32-180 (EAEEEQRILQ…EGDIKAQFIG (149 aa)). S43 is subject to Phosphoserine. A thioredoxin fold region spans residues 91–239 (FGEVLEISGK…MKRDSDSEGD (149 aa)). 2 interaction with XIAP regions span residues 97–99 (ISG) and 153–155 (TCI). A phosphoserine mark is found at S234 and S236.

This sequence belongs to the phosducin family. Interacts (via thioredoxin fold region) with KDR/VEGFR2 (via juxtamembrane domain). Forms ternary complexes with the chaperonin CCT complex and actin substrate, leading to inhibition of actin folding. Interacts with XIAP (via BIR 3 and RING domain). Interacts with HSP90AA1 and HSP90AB1. Post-translationally, N-terminal methionine acetylation destabilizes the protein. Expressed in endothelial cells (at protein level). Expressed in all tissues examined including spleen, thymus, prostate, testis, ovary, small intestine and colon.

The protein localises to the cytoplasm. It localises to the perinuclear region. The protein resides in the endoplasmic reticulum. In terms of biological role, acts as a chaperone for the angiogenic VEGF receptor KDR/VEGFR2, increasing its abundance by inhibiting its ubiquitination and degradation. Inhibits the folding activity of the chaperonin-containing T-complex (CCT) which leads to inhibition of cytoskeletal actin folding. Acts as a chaperone during heat shock alongside HSP90 and HSP40/70 chaperone complexes. Modulates the activation of caspases during apoptosis. The chain is Phosducin-like protein 3 (PDCL3) from Homo sapiens (Human).